The chain runs to 1165 residues: DNA-directed RNA polymerase subunit beta' (1165 aa).

The Zn(2+) site is built by Cys60, Cys62, Cys75, and Cys78. Mg(2+)-binding residues include Asp449, Asp451, and Asp453. Residues Cys794, Cys868, Cys875, and Cys878 each contribute to the Zn(2+) site.

The protein belongs to the RNA polymerase beta' chain family. In terms of assembly, the RNAP catalytic core consists of 2 alpha, 1 beta, 1 beta' and 1 omega subunit. When a sigma factor is associated with the core the holoenzyme is formed, which can initiate transcription. The cofactor is Mg(2+). It depends on Zn(2+) as a cofactor.

It catalyses the reaction RNA(n) + a ribonucleoside 5'-triphosphate = RNA(n+1) + diphosphate. Its function is as follows. DNA-dependent RNA polymerase catalyzes the transcription of DNA into RNA using the four ribonucleoside triphosphates as substrates. The chain is DNA-directed RNA polymerase subunit beta' from Acetivibrio thermocellus (strain ATCC 27405 / DSM 1237 / JCM 9322 / NBRC 103400 / NCIMB 10682 / NRRL B-4536 / VPI 7372) (Clostridium thermocellum).